Consider the following 405-residue polypeptide: Type II secretion system protein F (405 aa).

The Cytoplasmic portion of the chain corresponds to 1 to 168 (MAAFEYLALD…QRQQSRQKIQ (168 aa)). Positions 97, 151, and 155 each coordinate Ca(2+). A helical transmembrane segment spans residues 169 to 189 (LALLYPVILMVASLAIVGFLL). At 190-219 (GYVVPDVVRVFIDSGQTLPLLTRVLIGVSD) the chain is on the periplasmic side. A helical membrane pass occupies residues 220-239 (WVKAWGALAFVAAIGGVIGF). The Cytoplasmic segment spans residues 240–376 (RYALRKDAFR…IGLMVGLFEP (137 aa)). Residues 377 to 397 (FMLIFMGAVVLVIVLAILLPI) traverse the membrane as a helical segment. Over 398-405 (LSLNQLVG) the chain is Periplasmic.

This sequence belongs to the GSP F family. As to quaternary structure, type II secretion system is composed of four main components: the outer membrane complex, the inner membrane complex, the cytoplasmic secretion ATPase and the periplasm-spanning pseudopilus. Homodimer. Interacts with XcpR/GspE and XcpY/GspL components.

It is found in the cell inner membrane. In terms of biological role, component of the type II secretion system inner membrane complex required for the energy-dependent secretion of extracellular factors such as proteases and toxins from the periplasm. This is Type II secretion system protein F (xcpS) from Pseudomonas aeruginosa (strain ATCC 15692 / DSM 22644 / CIP 104116 / JCM 14847 / LMG 12228 / 1C / PRS 101 / PAO1).